A 674-amino-acid chain; its full sequence is MAAGGAEGGSGPGAAMGDCAEIKSQFRTREGFYKLLPGDGAARRSGPASAQTPVPPQPPQPPPGPASASGPGAAGPASSPPPAGPGPGPALPAVRLSLVRLGEPDSAGAGEPPATPAGLGSGGDRVCFNLGRELYFYPGCCRRGSQRSIDLNKPIDKRIYKGTQPTCHDFNQFTAATETISLLVGFSAGQVQYLDLIKKDTSKLFNEERLIDKTKVTYLKWLPESESLFLASHASGHLYLYNVSHPCASAPPQYSLLKQGEGFSVYAAKSKAPRNPLAKWAVGEGPLNEFAFSPDGRHLACVSQDGCLRVFHFDSMLLRGLMKSYFGGLLCVCWSPDGRYVVTGGEDDLVTVWSFTEGRVVARGHGHKSWVNAVAFDPYTTRAEEAATAAGADGERSGEEEEEEPEAAGTGSAGGAPLSPLPKAGSITYRFGSAGQDTQFCLWDLTEDVLYPHPPLARTRTLPGTPGTTPPAASSSRGGEPGPGPLPRSLSRSNSLPHPAGGGKAGGPGVAAEPGTPFSIGRFATLTLQERRDRGAEKEHKRYHSLGNISRGGSGGSGSGGEKPSGPVPRSRLDPAKVLGTALCPRIHEVPLLEPLVCKKIAQERLTVLLFLEDCIITACQEGLICTWARPGKAFTDEETEAQTGEGSWPRSPSKSVVEGISSQPGNSPSGTVV.

Ala2 bears the N-acetylalanine mark. 2 disordered regions span residues 31–92 (GFYK…PALP) and 103–122 (EPDSAGAGEPPATPAGLGSG). A compositionally biased stretch (pro residues) spans 53 to 65 (PVPPQPPQPPPGP). A compositionally biased stretch (low complexity) spans 66-77 (ASASGPGAAGPA). Pro residues predominate over residues 78-90 (SSPPPAGPGPGPA). A compositionally biased stretch (low complexity) spans 107-118 (AGAGEPPATPAG). WD repeat units follow at residues 211–251 (IDKT…ASAP), 282–321 (VGEGPLNEFAFSPDGRHLACVSQDGCLRVFHFDSMLLRGL), 324–363 (SYFGGLLCVCWSPDGRYVVTGGEDDLVTVWSFTEGRVVAR), 366–409 (GHKS…EAAG), and 413–453 (AGGA…LYPH). Disordered regions lie at residues 384–419 (EEAATAAGADGERSGEEEEEEPEAAGTGSAGGAPLS), 456–516 (LART…EPGT), 532–573 (RDRG…RSRL), and 637–674 (DEETEAQTGEGSWPRSPSKSVVEGISSQPGNSPSGTVV). Composition is skewed to low complexity over residues 457–478 (ARTRTLPGTPGTTPPAASSSRG) and 487–499 (PRSLSRSNSLPHP). Ser495 is subject to Phosphoserine. 2 stretches are compositionally biased toward gly residues: residues 500-509 (AGGGKAGGPG) and 550-563 (SRGGSGGSGSGGEK). Arg551 carries the post-translational modification Omega-N-methylarginine. The stretch at 601 to 638 (IAQERLTVLLFLEDCIITACQEGLICTWARPGKAFTDE) is one WD 6 repeat. Residues 642 to 674 (AQTGEGSWPRSPSKSVVEGISSQPGNSPSGTVV) show a composition bias toward polar residues.

In terms of assembly, component of the USP12/DMWD/WDR48 deubiquitinating complex. Interacts with USP12; promotes its enzymatic activity. Interacts with USP46.

The protein resides in the cytoplasm. The protein localises to the nucleus. It localises to the perikaryon. Its subcellular location is the cell projection. It is found in the dendrite. Its function is as follows. Regulator of the deubiquitinating USP12/DMWD/WDR48 complex. Functions as a cofactor that promotes USP12 enzymatic activity. This is Dystrophia myotonica WD repeat-containing protein from Homo sapiens (Human).